Here is a 550-residue protein sequence, read N- to C-terminus: Glucose-6-phosphate isomerase (550 aa).

E356 (proton donor) is an active-site residue. Residues H387 and K515 contribute to the active site.

It belongs to the GPI family.

It localises to the cytoplasm. It catalyses the reaction alpha-D-glucose 6-phosphate = beta-D-fructose 6-phosphate. It functions in the pathway carbohydrate biosynthesis; gluconeogenesis. The protein operates within carbohydrate degradation; glycolysis; D-glyceraldehyde 3-phosphate and glycerone phosphate from D-glucose: step 2/4. Catalyzes the reversible isomerization of glucose-6-phosphate to fructose-6-phosphate. This is Glucose-6-phosphate isomerase from Vibrio cholerae serotype O1 (strain ATCC 39541 / Classical Ogawa 395 / O395).